A 340-amino-acid polypeptide reads, in one-letter code: tRNA N6-adenosine threonylcarbamoyltransferase (340 aa).

Residues His111 and His115 each contribute to the Fe cation site. Substrate-binding positions include 133-137, Asp166, Gly179, Asp183, and Asn273; that span reads VVSGG. Asp301 serves as a coordination point for Fe cation.

This sequence belongs to the KAE1 / TsaD family. Fe(2+) is required as a cofactor.

The protein resides in the cytoplasm. It catalyses the reaction L-threonylcarbamoyladenylate + adenosine(37) in tRNA = N(6)-L-threonylcarbamoyladenosine(37) in tRNA + AMP + H(+). In terms of biological role, required for the formation of a threonylcarbamoyl group on adenosine at position 37 (t(6)A37) in tRNAs that read codons beginning with adenine. Is involved in the transfer of the threonylcarbamoyl moiety of threonylcarbamoyl-AMP (TC-AMP) to the N6 group of A37, together with TsaE and TsaB. TsaD likely plays a direct catalytic role in this reaction. The polypeptide is tRNA N6-adenosine threonylcarbamoyltransferase (Pelobacter propionicus (strain DSM 2379 / NBRC 103807 / OttBd1)).